The following is a 410-amino-acid chain: D-3-phosphoglycerate dehydrogenase (410 aa).

NAD(+) is bound by residues 161–162, aspartate 181, 238–240, and aspartate 264; these read HI and ASR. Residue arginine 240 is part of the active site. The active site involves glutamate 269. Histidine 292 acts as the Proton donor in catalysis. 292–295 contributes to the NAD(+) binding site; that stretch reads HIGG. In terms of domain architecture, ACT spans 339–410; sequence RLMHIHENRP…PGTIRARLLY (72 aa).

This sequence belongs to the D-isomer specific 2-hydroxyacid dehydrogenase family. As to quaternary structure, homotetramer.

The enzyme catalyses (2R)-3-phosphoglycerate + NAD(+) = 3-phosphooxypyruvate + NADH + H(+). It carries out the reaction (R)-2-hydroxyglutarate + NAD(+) = 2-oxoglutarate + NADH + H(+). The protein operates within amino-acid biosynthesis; L-serine biosynthesis; L-serine from 3-phospho-D-glycerate: step 1/3. Its activity is regulated as follows. In bacteria displays feedback inhibition by L-serine. In terms of biological role, catalyzes the reversible oxidation of 3-phospho-D-glycerate to 3-phosphonooxypyruvate, the first step of the phosphorylated L-serine biosynthesis pathway. Also catalyzes the reversible oxidation of 2-hydroxyglutarate to 2-oxoglutarate. The polypeptide is D-3-phosphoglycerate dehydrogenase (serA) (Escherichia coli O6:H1 (strain CFT073 / ATCC 700928 / UPEC)).